A 101-amino-acid polypeptide reads, in one-letter code: Acylphosphatase (101 aa).

The Acylphosphatase-like domain maps to arginine 12–arginine 98. Active-site residues include arginine 27 and asparagine 45.

The protein belongs to the acylphosphatase family.

It carries out the reaction an acyl phosphate + H2O = a carboxylate + phosphate + H(+). This Nostoc sp. (strain PCC 7120 / SAG 25.82 / UTEX 2576) protein is Acylphosphatase (acyP).